Consider the following 256-residue polypeptide: Imidazole glycerol phosphate synthase subunit hisF1 (256 aa).

Catalysis depends on residues D12 and D131.

It belongs to the HisA/HisF family. As to quaternary structure, heterodimer of HisH and HisF.

Its subcellular location is the cytoplasm. It carries out the reaction 5-[(5-phospho-1-deoxy-D-ribulos-1-ylimino)methylamino]-1-(5-phospho-beta-D-ribosyl)imidazole-4-carboxamide + L-glutamine = D-erythro-1-(imidazol-4-yl)glycerol 3-phosphate + 5-amino-1-(5-phospho-beta-D-ribosyl)imidazole-4-carboxamide + L-glutamate + H(+). It participates in amino-acid biosynthesis; L-histidine biosynthesis; L-histidine from 5-phospho-alpha-D-ribose 1-diphosphate: step 5/9. In terms of biological role, IGPS catalyzes the conversion of PRFAR and glutamine to IGP, AICAR and glutamate. The HisF subunit catalyzes the cyclization activity that produces IGP and AICAR from PRFAR using the ammonia provided by the HisH subunit. The chain is Imidazole glycerol phosphate synthase subunit hisF1 (hisF1) from Pseudomonas aeruginosa (strain ATCC 15692 / DSM 22644 / CIP 104116 / JCM 14847 / LMG 12228 / 1C / PRS 101 / PAO1).